The primary structure comprises 323 residues: uncharacterized protein (323 aa).

In terms of domain architecture, S4 RNA-binding spans 16 to 95 (QRIDQFCLKI…DKLKIIFEDE (80 aa)). The active site involves aspartate 148.

This sequence belongs to the pseudouridine synthase RluA family.

It carries out the reaction a uridine in RNA = a pseudouridine in RNA. This is an uncharacterized protein from Mycoplasma genitalium (strain ATCC 33530 / DSM 19775 / NCTC 10195 / G37) (Mycoplasmoides genitalium).